The sequence spans 129 residues: ATP synthase epsilon chain (129 aa).

This sequence belongs to the ATPase epsilon chain family. As to quaternary structure, F-type ATPases have 2 components, CF(1) - the catalytic core - and CF(0) - the membrane proton channel. CF(1) has five subunits: alpha(3), beta(3), gamma(1), delta(1), epsilon(1). CF(0) has three main subunits: a, b and c.

The protein localises to the cell inner membrane. In terms of biological role, produces ATP from ADP in the presence of a proton gradient across the membrane. The sequence is that of ATP synthase epsilon chain from Campylobacter jejuni subsp. jejuni serotype O:2 (strain ATCC 700819 / NCTC 11168).